We begin with the raw amino-acid sequence, 267 residues long: Apolipoprotein A-I (267 aa).

The signal sequence occupies residues 1 to 18 (MKATVLTLAVLFLTGSQA). 2 tandem repeats follow at residues 68–89 (LKLLDNWDSVTSTVSKLREQLG) and 90–111 (PVTQEFWDNLEKETEGLRQEMS). A 10 X approximate tandem repeats region spans residues 68–267 (LKLLDNWDSV…EEYTKKLSTQ (200 aa)). The residue at position 110 (M110) is a Methionine sulfoxide. Residues 112–122 (KDLEEVKAKVQ) form a 3; half-length repeat. 5 repeat units span residues 123-144 (PYLDDFQKKWQEEMELYRQKVE), 145-166 (PLRAELHEGTRQKLHELHEKLS), 167-188 (PLGEEVRDRARAHVDALRTHLA), 189-210 (PYSDELRQRLAARLEALKENGG), and 211-232 (ARLAEYHAKASEHLSTLSEKAK). M136 is modified (methionine sulfoxide). Residues 233–243 (PALEDLRQGLL) form a 9; half-length repeat. Repeat 10 spans residues 244-267 (PVLESFKVSFLSALEEYTKKLSTQ).

Belongs to the apolipoprotein A1/A4/E family. In terms of assembly, homodimer. Interacts with APOA1BP and CLU. Component of a sperm activating protein complex (SPAP), consisting of APOA1, an immunoglobulin heavy chain, an immunoglobulin light chain and albumin. Interacts with NDRG1. Interacts with SCGB3A2. Interacts with NAXE and YJEFN3. Glycosylated. Post-translationally, palmitoylated. In terms of processing, phosphorylation sites are present in the extracellular medium. Major protein of plasma HDL, also found in chylomicrons.

Its subcellular location is the secreted. In terms of biological role, participates in the reverse transport of cholesterol from tissues to the liver for excretion by promoting cholesterol efflux from tissues and by acting as a cofactor for the lecithin cholesterol acyltransferase (LCAT). As part of the SPAP complex, activates spermatozoa motility. This Papio hamadryas (Hamadryas baboon) protein is Apolipoprotein A-I (APOA1).